The sequence spans 470 residues: Aldehyde dehydrogenase family 3 comG (470 aa).

196–201 (GSVKVG) contributes to the NAD(+) binding site. Active-site residues include Glu218 and Cys252.

Belongs to the aldehyde dehydrogenase family.

The protein resides in the cytoplasm. The enzyme catalyses an aldehyde + NADP(+) + H2O = a carboxylate + NADPH + 2 H(+). It catalyses the reaction an aldehyde + NAD(+) + H2O = a carboxylate + NADH + 2 H(+). The chain is Aldehyde dehydrogenase family 3 comG (comG) from Dictyostelium discoideum (Social amoeba).